A 132-amino-acid polypeptide reads, in one-letter code: Bombinin-like peptides (132 aa).

Residues 1-18 (MNFKYIIAVSFLIASAYA) form the signal peptide. Residues 19–42 (RSEEYDIQSLSQRDVLEEESLRKI) constitute a propeptide that is removed on maturation. F68 carries the phenylalanine amide modification. A propeptide spanning residues 72–112 (TAEDHEVMKRLEAAMRDLDSLDYPEEASERETRGFNQEEKE) is cleaved from the precursor. Position 131 is a leucine amide (L131).

This sequence belongs to the bombinin family. As to expression, expressed by the skin glands.

It localises to the secreted. Has antimicrobial activity against Gram-negative bacterium E.coli (MIC=26.3 uM), Gram-positive bacterium S.aureus (MIC=26.3 uM) and yeast C.albicans (MIC=52.5 uM). Has moderate hemolytic activity towards human erythrocytes at a concentration of 52.2 uM. In terms of biological role, has no antimicrobial activity at concentrations up to 161 uM. Has moderate hemolytic activity towards human erythrocytes at a concentration of 40.3 uM. The chain is Bombinin-like peptides from Bombina orientalis (Oriental fire-bellied toad).